Reading from the N-terminus, the 256-residue chain is uncharacterized protein (256 aa).

This is an uncharacterized protein from Treponema pallidum (strain Nichols).